The primary structure comprises 181 residues: uncharacterized protein (181 aa).

Gly residues-rich tracts occupy residues 143-156 (RRGGRYGDFGGPRG) and 170-181 (GPFGPGYRGPRF). Residues 143–181 (RRGGRYGDFGGPRGPRGPRNDGPFGPFGPFGPGYRGPRF) form a disordered region.

In terms of assembly, has been detected in a cytochrome bc1-aa3 supercomplex; its deletion however leaves complex activity unaffected.

This is an uncharacterized protein from Corynebacterium glutamicum (strain ATCC 13032 / DSM 20300 / JCM 1318 / BCRC 11384 / CCUG 27702 / LMG 3730 / NBRC 12168 / NCIMB 10025 / NRRL B-2784 / 534).